A 378-amino-acid polypeptide reads, in one-letter code: Alpha-(1,3)-fucosyltransferase fut-5 (378 aa).

Over 1–7 (MKHNTLR) the chain is Cytoplasmic. A helical; Signal-anchor for type II membrane protein membrane pass occupies residues 8-28 (AVFQFSFFIGICTFIMIAGYS). Residues 29–378 (YQINYNQRMG…CDNSFATRFL (350 aa)) are Lumenal-facing. 6 N-linked (GlcNAc...) asparagine glycosylation sites follow: Asn44, Asn88, Asn105, Asn143, Asn171, and Asn307.

This sequence belongs to the glycosyltransferase 10 family. Requires Ca(2+) as cofactor. Post-translationally, N-glycosylated.

The protein localises to the golgi apparatus. The protein resides in the golgi stack membrane. It catalyses the reaction a beta-D-galactosyl-(1-&gt;3)-N-acetyl-beta-D-glucosaminyl derivative + GDP-beta-L-fucose = a beta-D-galactosyl-(1-&gt;3)-[alpha-L-fucosyl-(1-&gt;4)]-N-acetyl-beta-D-glucosaminyl derivative + GDP + H(+). It participates in protein modification; protein glycosylation. Inhibited by Cu(2+) and Ni(2+), and to a lesser extent by EDTA, Mn(2+) and Mg(2+). Its function is as follows. Catalyzes the addition of fucose in alpha 1-3 linkage to GalNAc-beta-1-&gt;4-GlcNAc-beta-1-&gt;3-Gal-beta-1-&gt;4-Glc (LDNT)acceptor. Unlike fut-1, does not add fucose to Man-alpha-1-&gt;3-(Man-alpha-1-&gt;6)-Man-beta-1-&gt;4-GlcNAc-beta-1-&gt;4-GlcNAc-beta-1-Asn (M3), Man-alpha-1-&gt;3-(Man-alpha-1-&gt;6)-Man-beta-1-&gt;4-GlcNAc-beta-1-&gt;4-(Fuc-alpha-1-&gt;6)-GlcNAc-beta-1-Asn (M3F6) or GlcNAc-beta-1-&gt;2-Man-alpha-1-&gt;3-(GlcNAc-beta-1-&gt;2-Man-alpha-1-&gt;6)-Man-beta-1-4-GlcNAc-beta-1-&gt;4-(Fuc-alpha-1-&gt;6)-GlcNAc-beta-1-Asn (GnM3F6) acceptors. In Caenorhabditis elegans, this protein is Alpha-(1,3)-fucosyltransferase fut-5.